The sequence spans 392 residues: Phosphopentomutase (392 aa).

6 residues coordinate Mn(2+): Asp-15, Asp-287, His-292, Asp-328, His-329, and His-340.

Belongs to the phosphopentomutase family. It depends on Mn(2+) as a cofactor.

The protein resides in the cytoplasm. The catalysed reaction is 2-deoxy-alpha-D-ribose 1-phosphate = 2-deoxy-D-ribose 5-phosphate. It catalyses the reaction alpha-D-ribose 1-phosphate = D-ribose 5-phosphate. The protein operates within carbohydrate degradation; 2-deoxy-D-ribose 1-phosphate degradation; D-glyceraldehyde 3-phosphate and acetaldehyde from 2-deoxy-alpha-D-ribose 1-phosphate: step 1/2. Its function is as follows. Isomerase that catalyzes the conversion of deoxy-ribose 1-phosphate (dRib-1-P) and ribose 1-phosphate (Rib-1-P) to deoxy-ribose 5-phosphate (dRib-5-P) and ribose 5-phosphate (Rib-5-P), respectively. This Syntrophotalea carbinolica (strain DSM 2380 / NBRC 103641 / GraBd1) (Pelobacter carbinolicus) protein is Phosphopentomutase.